We begin with the raw amino-acid sequence, 371 residues long: Serpentine receptor class delta-1 (371 aa).

7 helical membrane passes run 31-51, 62-82, 109-129, 148-168, 209-229, 267-287, and 295-315; these read LSEV…YVIF, AVLL…SLLA, CFFC…ILLI, MIVI…FYFW, IPSL…YFII, AIPI…FGII, and ITFR…FIFI. The interval 344–371 is disordered; the sequence is EKFNQPPKQPTNPAQQSANNDAAKTEKV. Over residues 354-365 the composition is skewed to polar residues; sequence TNPAQQSANNDA.

This sequence belongs to the nematode receptor-like protein srd family.

The protein localises to the membrane. The chain is Serpentine receptor class delta-1 (srd-1) from Caenorhabditis elegans.